The following is a 202-amino-acid chain: Holliday junction branch migration complex subunit RuvA (202 aa).

Positions 1–62 are domain I; the sequence is MYEYLHGLIT…DTAQTLYGFS (62 aa). Positions 63-141 are domain II; sequence DFAEKQLFLK…DLAPATDDNT (79 aa). The flexible linker stretch occupies residues 142-151; the sequence is LFTPEVAPTT. The interval 152–202 is domain III; that stretch reads TENPQLADALAALTALGYRETAVKKITAQLRQFNGQTTNDYLSEGLRLLTK.

The protein belongs to the RuvA family. Homotetramer. Forms an RuvA(8)-RuvB(12)-Holliday junction (HJ) complex. HJ DNA is sandwiched between 2 RuvA tetramers; dsDNA enters through RuvA and exits via RuvB. An RuvB hexamer assembles on each DNA strand where it exits the tetramer. Each RuvB hexamer is contacted by two RuvA subunits (via domain III) on 2 adjacent RuvB subunits; this complex drives branch migration. In the full resolvosome a probable DNA-RuvA(4)-RuvB(12)-RuvC(2) complex forms which resolves the HJ.

It localises to the cytoplasm. Its function is as follows. The RuvA-RuvB-RuvC complex processes Holliday junction (HJ) DNA during genetic recombination and DNA repair, while the RuvA-RuvB complex plays an important role in the rescue of blocked DNA replication forks via replication fork reversal (RFR). RuvA specifically binds to HJ cruciform DNA, conferring on it an open structure. The RuvB hexamer acts as an ATP-dependent pump, pulling dsDNA into and through the RuvAB complex. HJ branch migration allows RuvC to scan DNA until it finds its consensus sequence, where it cleaves and resolves the cruciform DNA. The polypeptide is Holliday junction branch migration complex subunit RuvA (Levilactobacillus brevis (strain ATCC 367 / BCRC 12310 / CIP 105137 / JCM 1170 / LMG 11437 / NCIMB 947 / NCTC 947) (Lactobacillus brevis)).